A 62-amino-acid chain; its full sequence is uncharacterized protein (62 aa).

The protein resides in the plastid. It is found in the chloroplast. This is an uncharacterized protein from Porphyra purpurea (Red seaweed).